The chain runs to 438 residues: Ribosomal protein uS12 methylthiotransferase RimO (438 aa).

The region spanning 1-116 is the MTTase N-terminal domain; that stretch reads MNVGFISLGC…IWKEIENLLD (116 aa). Residues Cys10, Cys46, Cys79, Cys147, Cys151, and Cys154 each contribute to the [4Fe-4S] cluster site. The region spanning 133 to 363 is the Radical SAM core domain; the sequence is TTGSNMAYLK…MALQEKISRE (231 aa). A TRAM domain is found at 366-435; that stretch reads EQKVGNVYKV…DYDLFGELYT (70 aa).

It belongs to the methylthiotransferase family. RimO subfamily. It depends on [4Fe-4S] cluster as a cofactor.

It is found in the cytoplasm. It carries out the reaction L-aspartate(89)-[ribosomal protein uS12]-hydrogen + (sulfur carrier)-SH + AH2 + 2 S-adenosyl-L-methionine = 3-methylsulfanyl-L-aspartate(89)-[ribosomal protein uS12]-hydrogen + (sulfur carrier)-H + 5'-deoxyadenosine + L-methionine + A + S-adenosyl-L-homocysteine + 2 H(+). In terms of biological role, catalyzes the methylthiolation of an aspartic acid residue of ribosomal protein uS12. The polypeptide is Ribosomal protein uS12 methylthiotransferase RimO (Alkaliphilus oremlandii (strain OhILAs) (Clostridium oremlandii (strain OhILAs))).